Consider the following 623-residue polypeptide: GATA zinc finger domain-containing protein 6 (623 aa).

3 disordered regions span residues 137-156 (IISP…GNNF), 167-197 (INNN…TAST), and 245-289 (PTTT…TAST). The segment covering 167–179 (INNNSNNNNNNNN) has biased composition (low complexity). The segment covering 185-197 (KQQTSKGSATAST) has biased composition (polar residues). The segment at 320–345 (CHSCGETQTSQWRRGPDGCKSLCNAC) adopts a GATA-type zinc-finger fold. A disordered region spans residues 398–509 (IQQQQQKDDH…SINHNDKLIN (112 aa)). The span at 410 to 482 (LSRPSSFSSQ…TSPTISSESL (73 aa)) shows a compositional bias: low complexity. Positions 483-502 (NFSSATNTPTNLSPNLQSIN) are enriched in polar residues.

This Dictyostelium discoideum (Social amoeba) protein is GATA zinc finger domain-containing protein 6 (gtaF).